Here is a 350-residue protein sequence, read N- to C-terminus: Casein kinase II subunit alpha' (350 aa).

Tyr-13 bears the Phosphotyrosine mark. Residues Ser-18 and Ser-21 each carry the phosphoserine modification. The 286-residue stretch at Tyr-40–Phe-325 folds into the Protein kinase domain. ATP contacts are provided by residues Leu-46 to Val-54 and Lys-69. Lys-97 bears the N6-acetyllysine mark. Residue Asp-157 is the Proton acceptor of the active site. Ser-288 carries the phosphoserine modification.

Belongs to the protein kinase superfamily. Ser/Thr protein kinase family. CK2 subfamily. As to quaternary structure, heterotetramer composed of two catalytic subunits (alpha chain and/or alpha' chain) and two regulatory subunits (beta chains). The tetramer can exist as a combination of 2 alpha/2 beta, 2 alpha'/2 beta or 1 alpha/1 alpha'/2 beta subunits. Also part of a CK2-SPT16-SSRP1 complex composed of SSRP1, SUPT16H, CSNK2A1, CSNK2A2 and CSNK2B, which forms following UV irradiation. Interacts with RNPS1. Interacts with CSNK2A2IP (via C-terminus). Interacts with SIRT6; preventing CSNK2A2 localization to the nucleus. Interacts with HIRIP3. Highly expressed in brain, testis and mature epididymal spermatozoa. Weakly expressed in kidney, liver, lung, spleen and thymus (at protein level).

The protein resides in the nucleus. Its subcellular location is the cytoplasm. It carries out the reaction L-seryl-[protein] + ATP = O-phospho-L-seryl-[protein] + ADP + H(+). The catalysed reaction is L-threonyl-[protein] + ATP = O-phospho-L-threonyl-[protein] + ADP + H(+). With respect to regulation, constitutively active protein kinase whose activity is not directly affected by phosphorylation. Seems to be regulated by level of expression and localization. Catalytic subunit of a constitutively active serine/threonine-protein kinase complex that phosphorylates a large number of substrates containing acidic residues C-terminal to the phosphorylated serine or threonine. Regulates numerous cellular processes, such as cell cycle progression, apoptosis and transcription, as well as viral infection. May act as a regulatory node which integrates and coordinates numerous signals leading to an appropriate cellular response. During mitosis, functions as a component of the p53/TP53-dependent spindle assembly checkpoint (SAC) that maintains cyclin-B-CDK1 activity and G2 arrest in response to spindle damage. Also required for p53/TP53-mediated apoptosis, phosphorylating 'Ser-392' of p53/TP53 following UV irradiation. Phosphorylates a number of DNA repair proteins in response to DNA damage, such as MDC1, RAD9A, RAD51 and HTATSF1, promoting their recruitment to DNA damage sites. Can also negatively regulate apoptosis. Phosphorylates the caspases CASP9 and CASP2 and the apoptotic regulator NOL3. Phosphorylation protects CASP9 from cleavage and activation by CASP8, and inhibits the dimerization of CASP2 and activation of CASP8. Regulates transcription by direct phosphorylation of RNA polymerases I, II, III and IV. Also phosphorylates and regulates numerous transcription factors including NF-kappa-B, STAT1, CREB1, IRF1, IRF2, ATF1, SRF, MAX, JUN, FOS, MYC and MYB. Phosphorylates Hsp90 and its co-chaperones FKBP4 and CDC37, which is essential for chaperone function. Regulates Wnt signaling by phosphorylating CTNNB1 and the transcription factor LEF1. Acts as an ectokinase that phosphorylates several extracellular proteins. May phosphorylate histone H2A on 'Ser-1'. The sequence is that of Casein kinase II subunit alpha' (Csnk2a2) from Mus musculus (Mouse).